The sequence spans 395 residues: Elongation factor Tu (395 aa).

In terms of domain architecture, tr-type G spans 6–205 (KPHINVGTIG…NALEKISLPT (200 aa)). Positions 15–22 (GHVDHGKT) are G1. A GTP-binding site is contributed by 15 to 22 (GHVDHGKT). T22 is a binding site for Mg(2+). The segment at 59–63 (GITIS) is G2. A G3 region spans residues 80 to 83 (DCPG). GTP is bound by residues 80–84 (DCPGH) and 135–138 (NKCD). A G4 region spans residues 135–138 (NKCD). The G5 stretch occupies residues 173 to 175 (SAV).

It belongs to the TRAFAC class translation factor GTPase superfamily. Classic translation factor GTPase family. EF-Tu/EF-1A subfamily. In terms of assembly, monomer.

Its subcellular location is the cytoplasm. The enzyme catalyses GTP + H2O = GDP + phosphate + H(+). GTP hydrolase that promotes the GTP-dependent binding of aminoacyl-tRNA to the A-site of ribosomes during protein biosynthesis. This chain is Elongation factor Tu, found in Ehrlichia chaffeensis (strain ATCC CRL-10679 / Arkansas).